The following is a 106-amino-acid chain: MTPDRRLISIFRSSKKEEMYVYVDKKQGVGALPEALLQLFGKPQHVFDLLLTKEKPLARADAAEVMSAIDEKGFYLQMPPVQDDYMMDVVRAREQTPAVGRKDLDD.

The 85-residue stretch at 6–90 (RLISIFRSSK…VQDDYMMDVV (85 aa)) folds into the YcgL domain.

This chain is YcgL domain-containing protein HCH_02617, found in Hahella chejuensis (strain KCTC 2396).